We begin with the raw amino-acid sequence, 21 residues long: MSKVIETKQQVVTEIADKLRA.

The protein belongs to the universal ribosomal protein uL10 family. As to quaternary structure, part of the ribosomal stalk of the 50S ribosomal subunit. The N-terminus interacts with L11 and the large rRNA to form the base of the stalk. The C-terminus forms an elongated spine to which L12 dimers bind in a sequential fashion forming a multimeric L10(L12)X complex.

Its function is as follows. Forms part of the ribosomal stalk, playing a central role in the interaction of the ribosome with GTP-bound translation factors. The chain is Large ribosomal subunit protein uL10 (rplJ) from Bacillus cereus.